The chain runs to 130 residues: Single-stranded DNA-binding protein 1 (130 aa).

One can recognise an SSB domain in the interval 1–104; sequence MINNVVLIGR…VVAESFQILE (104 aa). Residues 108–130 form a disordered region; sequence NTANTSSLADSMPDYGPEPDLPF.

Homotetramer.

This chain is Single-stranded DNA-binding protein 1 (ssb1), found in Streptococcus pyogenes serotype M18 (strain MGAS8232).